A 121-amino-acid chain; its full sequence is MAPRPLLLLLLLLGGSAARPAPPRARRHSDGTFTSELSRLREGARLQRLLQGLVGKRSEQDAENSMAWTRLSAGLLCPSGSNMPILQAWMPLDGTWSPWLPPGPMVSEPAGAAAEGTLRPR.

An N-terminal signal peptide occupies residues 1-18 (MAPRPLLLLLLLLGGSAA). The propeptide occupies 19–26 (RPAPPRAR). At Val54 the chain carries Valine amide. Ser58 bears the Phosphoserine mark. A propeptide spanning residues 58-121 (SEQDAENSMA…AAAEGTLRPR (64 aa)) is cleaved from the precursor.

It belongs to the glucagon family.

Its subcellular location is the secreted. Its function is as follows. Hormone involved in different processes, such as regulation of the pH of the duodenal content, food intake and water homeostasis. Exerts its biological effects by binding to secretin receptor (SCTR), a G-protein coupled receptor expressed in the basolateral domain of several cells. Acts as a key gastrointestinal hormone by regulating the pH of the duodenal content. Secreted by S cells of the duodenum in the crypts of Lieberkuehn and regulates the pH of the duodenum by (1) inhibiting the secretion of gastric acid from the parietal cells of the stomach and (2) stimulating the production of bicarbonate (NaHCO(3)) from the ductal cells of the pancreas. Production of bicarbonate is essential to neutralize the pH and ensure no damage is done to the small intestine by the gastric acid. In addition to regulating the pH of the duodenal content, plays a central role in diet induced thermogenesis: acts as a non-sympathetic brown fat (BAT) activator mediating prandial thermogenesis, which consequentially induces satiation. Mechanistically, secretin released by the gut after a meal binds to secretin receptor (SCTR) in brown adipocytes, activating brown fat thermogenesis by stimulating lipolysis, which is sensed in the brain and promotes satiation. Also able to stimulate lipolysis in white adipocytes. Also plays an important role in cellular osmoregulation: released into the systemic circulation in response to hyperosmolality and acts at different levels in the hypothalamus, pituitary and kidney to regulate water homeostasis. Also plays a role in the central nervous system, possibly by acting as a neuropeptide hormone: required for hippocampal synaptic function and neural progenitor cells maintenance. This is Secretin from Homo sapiens (Human).